A 310-amino-acid polypeptide reads, in one-letter code: Ribosomal RNA small subunit methyltransferase H (310 aa).

S-adenosyl-L-methionine contacts are provided by residues 33-35 (AGH), Asp53, Tyr83, Asp100, and Gln107.

The protein belongs to the methyltransferase superfamily. RsmH family.

Its subcellular location is the cytoplasm. It carries out the reaction cytidine(1402) in 16S rRNA + S-adenosyl-L-methionine = N(4)-methylcytidine(1402) in 16S rRNA + S-adenosyl-L-homocysteine + H(+). Its function is as follows. Specifically methylates the N4 position of cytidine in position 1402 (C1402) of 16S rRNA. The polypeptide is Ribosomal RNA small subunit methyltransferase H (Clostridium perfringens (strain ATCC 13124 / DSM 756 / JCM 1290 / NCIMB 6125 / NCTC 8237 / Type A)).